Reading from the N-terminus, the 279-residue chain is Protein SCO2 homolog, mitochondrial (279 aa).

The chain crosses the membrane as a helical span at residues 73-90 (LVVTLLFGGGIIGTWWYV). The Mitochondrial intermembrane segment spans residues 91 to 279 (HQEKEKRIQM…MKTFVRLFPD (189 aa)). One can recognise a Thioredoxin domain in the interval 97-271 (RIQMQRLEQL…IAESIRNHMK (175 aa)). Positions 145, 149, and 236 each coordinate Cu cation. Cys145 and Cys149 are disulfide-bonded.

The protein belongs to the SCO1/2 family. In terms of assembly, homodimer.

It localises to the mitochondrion inner membrane. Copper metallochaperone essential for the synthesis and maturation of cytochrome c oxidase subunit II (MT-CO2/COX2) by facilitating the incorporation of copper into the Cu(A) site of MT-CO2/COX2. Could also act as a thiol-disulfide oxidoreductase to regulate the redox state of the cysteines in SCO1 during maturation of MT-CO2/COX2. In Danio rerio (Zebrafish), this protein is Protein SCO2 homolog, mitochondrial (sco2).